The chain runs to 372 residues: Heat-inducible transcription repressor HrcA (372 aa).

Residues 300 to 334 form a disordered region; the sequence is YGRSGAAGEPAGNDPVGEPETESETESQTNDTEPI.

Belongs to the HrcA family.

In terms of biological role, negative regulator of class I heat shock genes (grpE-dnaK-dnaJ and groELS operons). Prevents heat-shock induction of these operons. The chain is Heat-inducible transcription repressor HrcA from Bifidobacterium longum (strain NCC 2705).